A 177-amino-acid chain; its full sequence is Large ribosomal subunit protein uL6 (177 aa).

This sequence belongs to the universal ribosomal protein uL6 family. In terms of assembly, part of the 50S ribosomal subunit.

Its function is as follows. This protein binds to the 23S rRNA, and is important in its secondary structure. It is located near the subunit interface in the base of the L7/L12 stalk, and near the tRNA binding site of the peptidyltransferase center. The protein is Large ribosomal subunit protein uL6 of Methylobacterium nodulans (strain LMG 21967 / CNCM I-2342 / ORS 2060).